The chain runs to 333 residues: Ketol-acid reductoisomerase (NADP(+)) (333 aa).

The region spanning methionine 1–threonine 171 is the KARI N-terminal Rossmann domain. NADP(+)-binding positions include tyrosine 14–glutamine 17, arginine 37, threonine 42, and aspartate 72–glutamine 75. The active site involves histidine 97. Glycine 123 contributes to the NADP(+) binding site. Residues threonine 172–leucine 317 enclose the KARI C-terminal knotted domain. Aspartate 180, glutamate 184, glutamate 216, and glutamate 220 together coordinate Mg(2+). Serine 241 provides a ligand contact to substrate.

It belongs to the ketol-acid reductoisomerase family. Requires Mg(2+) as cofactor.

It catalyses the reaction (2R)-2,3-dihydroxy-3-methylbutanoate + NADP(+) = (2S)-2-acetolactate + NADPH + H(+). The catalysed reaction is (2R,3R)-2,3-dihydroxy-3-methylpentanoate + NADP(+) = (S)-2-ethyl-2-hydroxy-3-oxobutanoate + NADPH + H(+). It participates in amino-acid biosynthesis; L-isoleucine biosynthesis; L-isoleucine from 2-oxobutanoate: step 2/4. It functions in the pathway amino-acid biosynthesis; L-valine biosynthesis; L-valine from pyruvate: step 2/4. Functionally, involved in the biosynthesis of branched-chain amino acids (BCAA). Catalyzes an alkyl-migration followed by a ketol-acid reduction of (S)-2-acetolactate (S2AL) to yield (R)-2,3-dihydroxy-isovalerate. In the isomerase reaction, S2AL is rearranged via a Mg-dependent methyl migration to produce 3-hydroxy-3-methyl-2-ketobutyrate (HMKB). In the reductase reaction, this 2-ketoacid undergoes a metal-dependent reduction by NADPH to yield (R)-2,3-dihydroxy-isovalerate. The protein is Ketol-acid reductoisomerase (NADP(+)) of Xanthomonas euvesicatoria pv. vesicatoria (strain 85-10) (Xanthomonas campestris pv. vesicatoria).